An 899-amino-acid chain; its full sequence is Protein translocase subunit SecA (899 aa).

Residues Q87, 105-109 (GEGKT), and D516 each bind ATP. Residues C884, C886, C895, and H896 each contribute to the Zn(2+) site.

This sequence belongs to the SecA family. Monomer and homodimer. Part of the essential Sec protein translocation apparatus which comprises SecA, SecYEG and auxiliary proteins SecDF. Other proteins may also be involved. It depends on Zn(2+) as a cofactor.

It localises to the cell inner membrane. It is found in the cytoplasm. It catalyses the reaction ATP + H2O + cellular proteinSide 1 = ADP + phosphate + cellular proteinSide 2.. Its function is as follows. Part of the Sec protein translocase complex. Interacts with the SecYEG preprotein conducting channel. Has a central role in coupling the hydrolysis of ATP to the transfer of proteins into and across the cell membrane, serving as an ATP-driven molecular motor driving the stepwise translocation of polypeptide chains across the membrane. This is Protein translocase subunit SecA from Borreliella afzelii (strain PKo) (Borrelia afzelii).